Here is a 624-residue protein sequence, read N- to C-terminus: Exocyst complex component EXO70B1 (624 aa).

Residues 148–176 (FGLNPQGDAGAMNHRFDSEEEEDDDRDFN) are disordered.

The protein belongs to the EXO70 family. In terms of assembly, interacts with EXO70B2, SEC5A and EXO84B. Binds to PUB18. Binds directly to B1L at the plasma membrane and in small vesicles. Post-translationally, target of the E3 ubiquitin-protein ligase PUB18 that mediates its ubiquitination and degradation via the 26S proteasome.

It localises to the cytoplasmic vesicle. The protein localises to the phagosome. Its subcellular location is the endomembrane system. It is found in the cell membrane. The protein resides in the vesicle. Component of an exocyst subcomplex specifically involved in autophagy-related, Golgi-independent membrane traffic to the vacuole. Regulates autophagosome formation and autophagy-related Golgi-independent import into the vacuole. Positive regulator of both abscisic acid (ABA)-promoted and mannitol (drought)-promoted stomatal closure. Involved in the regulation of lateral root formation. This is Exocyst complex component EXO70B1 from Arabidopsis thaliana (Mouse-ear cress).